A 142-amino-acid polypeptide reads, in one-letter code: Movement protein (142 aa).

The segment at 1 to 142 (MDLPEDQARF…LDRSESLSRY (142 aa)) is disordered. Polar residues-rich tracts occupy residues 9–22 (RFTNSYSLRTTSME) and 33–43 (LYQSASRSQMA). Residues 50–62 (SIISRTSSWRTSP) are compositionally biased toward low complexity. Composition is skewed to polar residues over residues 74 to 95 (MNSILTSRTQQSSPKLTNSASP) and 113 to 124 (TTLQRTNSGFST). Positions 125 to 142 (KETEMPRLLDRSESLSRY) are enriched in basic and acidic residues.

Belongs to the luteoviruses movement protein family.

Functionally, transports viral genome to neighboring plant cells directly through plasmosdesmata, without any budding. The movement protein allows efficient cell to cell propagation, by bypassing the host cell wall barrier. This Cicer arietinum (Chickpea) protein is Movement protein.